We begin with the raw amino-acid sequence, 92 residues long: Small ribosomal subunit protein uS19 (92 aa).

The protein belongs to the universal ribosomal protein uS19 family.

In terms of biological role, protein S19 forms a complex with S13 that binds strongly to the 16S ribosomal RNA. This is Small ribosomal subunit protein uS19 from Pelobacter propionicus (strain DSM 2379 / NBRC 103807 / OttBd1).